The sequence spans 228 residues: Cytidylate kinase (228 aa).

12-20 (GPSGAGKGT) serves as a coordination point for ATP.

The protein belongs to the cytidylate kinase family. Type 1 subfamily.

Its subcellular location is the cytoplasm. The catalysed reaction is CMP + ATP = CDP + ADP. It carries out the reaction dCMP + ATP = dCDP + ADP. This is Cytidylate kinase from Photobacterium profundum (strain SS9).